The following is a 163-amino-acid chain: Nucleotide-binding protein PMI0103 (163 aa).

The protein belongs to the YajQ family.

Its function is as follows. Nucleotide-binding protein. The chain is Nucleotide-binding protein PMI0103 from Proteus mirabilis (strain HI4320).